Here is a 485-residue protein sequence, read N- to C-terminus: Pelle-like serine/threonine-protein kinase pik-1 (485 aa).

Residues 115-132 show a composition bias toward polar residues; the sequence is TSRVSKQMVQPPGSQSAS. A disordered region spans residues 115 to 155; that stretch reads TSRVSKQMVQPPGSQSASRLKKTEIKESSPSPAAAAASQLS. Residues 142-152 show a composition bias toward low complexity; it reads SSPSPAAAAAS. Residues 185 to 485 form the Protein kinase domain; it reads FAVSNVIGKG…LCKNSIPPVV (301 aa). ATP-binding positions include 191–199 and Lys214; that span reads IGKGGYGTV. Catalysis depends on Asp318, which acts as the Proton acceptor.

Belongs to the protein kinase superfamily. TKL Ser/Thr protein kinase family. Pelle subfamily. In terms of assembly, interacts with actl-1. In terms of tissue distribution, expressed in the nervous system.

The catalysed reaction is L-seryl-[protein] + ATP = O-phospho-L-seryl-[protein] + ADP + H(+). The enzyme catalyses L-threonyl-[protein] + ATP = O-phospho-L-threonyl-[protein] + ADP + H(+). Through association with the adapter actl-1, may act downstream of the receptor complex composed of ilcr-1 and ilcr-2, which is a signaling complex that modulates neuronal activity and animal behavior in response to sensory neuron input. In Caenorhabditis elegans, this protein is Pelle-like serine/threonine-protein kinase pik-1.